We begin with the raw amino-acid sequence, 445 residues long: KIN17-like protein (445 aa).

The C2H2-type zinc-finger motif lies at 26-50 (WYCQLCEKQCRDENGFKCHISSESH). 2 stretches are compositionally biased toward low complexity: residues 215-229 (NTTTTTTNTTTTTTN) and 239-253 (NDNNSSNNNYNDQTN). The tract at residues 215 to 256 (NTTTTTTNTTTTTTNKNIFDKLKTNDNNSSNNNYNDQTNPKP) is disordered.

Belongs to the KIN17 family.

This chain is KIN17-like protein, found in Dictyostelium discoideum (Social amoeba).